Here is a 581-residue protein sequence, read N- to C-terminus: Coiled-coil domain-containing protein 102A (581 aa).

Disordered regions lie at residues 1 to 61 (MNHT…GLGC), 156 to 219 (QRVR…IGTD), 496 to 517 (QAED…SLDE), and 534 to 581 (SRLR…LQIP). Positions 39–59 (TPSPSGGTPSSSPPLLLSPGL) are enriched in low complexity. Residues 70 to 164 (REELRLRELE…AQRVRAEQSS (95 aa)) are a coiled coil. Positions 161 to 184 (EQSSPENASTAPESISSTASTHSN) are enriched in polar residues. A compositionally biased stretch (basic and acidic residues) spans 185-202 (QPREAEIKQDNQDEEGVR). Residues 270–541 (AALEEDTSKL…LQSRLRRQQN (272 aa)) adopt a coiled-coil conformation. Over residues 559-581 (EDADGPPSDPDEDEEEELQLQIP) the composition is skewed to acidic residues.

This is Coiled-coil domain-containing protein 102A (ccdc102a) from Danio rerio (Zebrafish).